We begin with the raw amino-acid sequence, 270 residues long: Bifunctional folate synthesis protein (270 aa).

The DHNA stretch occupies residues 1-119 (MDQLQIKDLE…TCSVTIHRRK (119 aa)). Substrate contacts are provided by residues Glu21, Tyr53, and 72-73 (IE). Lys99 functions as the Proton donor/acceptor; for DHNA activity in the catalytic mechanism. Positions 120 to 270 (QRAFIALGSN…IRNLYDALKK (151 aa)) are HPPK. ATP contacts are provided by residues 160-163 (TEPW), 171-173 (FAN), 192-195 (LAIE), 200-215 (RVRE…DLDL), 227-233 (DLILPHP), and 238-240 (RLF). Asp212 and Asp214 together coordinate Mg(2+).

In the N-terminal section; belongs to the DHNA family. This sequence in the C-terminal section; belongs to the HPPK family. As to quaternary structure, homotrimer or homotetramer.

It catalyses the reaction 7,8-dihydroneopterin = 6-hydroxymethyl-7,8-dihydropterin + glycolaldehyde. It carries out the reaction 6-hydroxymethyl-7,8-dihydropterin + ATP = (7,8-dihydropterin-6-yl)methyl diphosphate + AMP + H(+). It functions in the pathway cofactor biosynthesis; tetrahydrofolate biosynthesis; 2-amino-4-hydroxy-6-hydroxymethyl-7,8-dihydropteridine diphosphate from 7,8-dihydroneopterin triphosphate: step 3/4. Its pathway is cofactor biosynthesis; tetrahydrofolate biosynthesis; 2-amino-4-hydroxy-6-hydroxymethyl-7,8-dihydropteridine diphosphate from 7,8-dihydroneopterin triphosphate: step 4/4. Its function is as follows. Catalyzes two sequential steps of tetrahydrofolate biosynthesis, the conversion of 7,8-dihydroneopterin to 6-hydroxymethyl-7,8-dihydropterin diphosphate. This chain is Bifunctional folate synthesis protein, found in Streptococcus pneumoniae serotype 4 (strain ATCC BAA-334 / TIGR4).